Reading from the N-terminus, the 231-residue chain is Potassium/proton antiporter CemA (231 aa).

A run of 4 helical transmembrane segments spans residues 7 to 27, 104 to 124, 154 to 174, and 189 to 209; these read FIPLLCLTSIVFLPWCISFTF, IHTILHFCTNIICFLILSVYS, ILFLIEFCVGYHSTGGWELMI, and IISFLVSILPAILDTIFKYWI.

This sequence belongs to the CemA family.

It localises to the plastid. It is found in the chloroplast inner membrane. The enzyme catalyses K(+)(in) + H(+)(out) = K(+)(out) + H(+)(in). Functionally, contributes to K(+)/H(+) antiport activity by supporting proton efflux to control proton extrusion and homeostasis in chloroplasts in a light-dependent manner to modulate photosynthesis. Prevents excessive induction of non-photochemical quenching (NPQ) under continuous-light conditions. Indirectly promotes efficient inorganic carbon uptake into chloroplasts. The polypeptide is Potassium/proton antiporter CemA (Pisum sativum (Garden pea)).